We begin with the raw amino-acid sequence, 1877 residues long: Proprotein convertase subtilisin/kexin type 5 (1877 aa).

The N-terminal stretch at 1 to 34 (MDWDWGNRCSRPGRRDLLCVLALLAGCLLPVCRT) is a signal peptide. The propeptide occupies 35 to 116 (RVYTNHWAVK…QQVVKKRTKR (82 aa)). At 117–1768 (DYDLSHAQST…EAEFYEHTKT (1652 aa)) the chain is on the extracellular side. A Peptidase S8 domain is found at 136–455 (MWYMHCSDNT…FGLMDAEAMV (320 aa)). Active-site charge relay system residues include Asp173 and His214. Residues Asn227 and Asn383 are each glycosylated (N-linked (GlcNAc...) asparagine). The active-site Charge relay system is Ser388. Residues 463–603 (TVPQQHVCVE…SLVLYGTSVQ (141 aa)) enclose the P/Homo B domain. The Cell attachment site signature appears at 521–523 (RGD). FU repeat units lie at residues 632–682 (EDYA…GHYH), 685–732 (KKRC…GSYE), 736–779 (KNVC…GQFF), 781–826 (GHDC…SYYL), 834–881 (YKSC…GEYI), 884–929 (QGHC…WKFE), 931–981 (KKQC…GHYP), 984–1030 (GHAC…GEFQ), 1034–1079 (YEEC…KTFG), 1081–1123 (KWEC…GFHG), 1127–1168 (LGEC…STWP), 1206–1248 (TSQN…GTWP), 1252–1299 (SGSC…GFYA), 1301–1345 (DGVC…KHVA), 1347–1390 (EGVC…SFYP), 1392–1438 (MRQC…GTYK), 1442–1487 (NDEC…VEYW), 1491–1536 (SHRC…GYHT), 1540–1585 (SQQC…GYYG), 1589–1636 (SGRC…HYYA), 1640–1685 (AQTC…GEYR), and 1691–1738 (NFNC…SHSR). Residues 638–1753 (CDPECSEVGC…CDCQSSTDEC (1116 aa)) are CRM (Cys-rich motif). Asn667 is a glycosylation site (N-linked (GlcNAc...) asparagine). 3 N-linked (GlcNAc...) asparagine glycosylation sites follow: Asn754, Asn804, and Asn854. Asn951 and Asn1016 each carry an N-linked (GlcNAc...) asparagine glycan. An N-linked (GlcNAc...) asparagine glycan is attached at Asn1220. Residue Asn1317 is glycosylated (N-linked (GlcNAc...) asparagine). A glycan (N-linked (GlcNAc...) asparagine) is linked at Asn1523. Residues Asn1711 and Asn1733 are each glycosylated (N-linked (GlcNAc...) asparagine). The chain crosses the membrane as a helical span at residues 1769–1789 (ALLVTSGAMLLLLLGAAAVVW). Residues 1790-1877 (RKSRSRPVAK…EYDDESYSYQ (88 aa)) are Cytoplasmic-facing. 2 AC regions span residues 1825–1844 (VIEY…IVYM) and 1856–1877 (YGLL…YSYQ).

The protein belongs to the peptidase S8 family. PC5A is expressed in most tissues but is most abundant in the intestine and adrenals. PC5B is expressed in the intestine, adrenals and lung but not in the brain.

Its subcellular location is the secreted. It localises to the endomembrane system. In terms of biological role, serine endoprotease that processes various proproteins by cleavage at paired basic amino acids, recognizing the RXXX[KR]R consensus motif. Likely functions in the constitutive and regulated secretory pathways. Plays an essential role in pregnancy establishment by proteolytic activation of a number of important factors such as BMP2, CALD1 and alpha-integrins. May be responsible for the maturation of gastrointestinal peptides. May be involved in the cellular proliferation of adrenal cortex via the activation of growth factors. This Mus musculus (Mouse) protein is Proprotein convertase subtilisin/kexin type 5 (Pcsk5).